The primary structure comprises 189 residues: uncharacterized protein (189 aa).

The 61-residue stretch at 9 to 69 (ADTGGRILRA…SMLTSHIAAV (61 aa)) folds into the HTH tetR-type domain. The H-T-H motif DNA-binding region spans 32–51 (TLAEIARRAGVSRPTVYRRW).

This is an uncharacterized protein from Mycobacterium bovis (strain ATCC BAA-935 / AF2122/97).